Here is a 429-residue protein sequence, read N- to C-terminus: 4-hydroxy-3-methylbut-2-en-1-yl diphosphate synthase (flavodoxin) (429 aa).

[4Fe-4S] cluster contacts are provided by C310, C313, C356, and E363.

It belongs to the IspG family. It depends on [4Fe-4S] cluster as a cofactor.

The enzyme catalyses (2E)-4-hydroxy-3-methylbut-2-enyl diphosphate + oxidized [flavodoxin] + H2O + 2 H(+) = 2-C-methyl-D-erythritol 2,4-cyclic diphosphate + reduced [flavodoxin]. It functions in the pathway isoprenoid biosynthesis; isopentenyl diphosphate biosynthesis via DXP pathway; isopentenyl diphosphate from 1-deoxy-D-xylulose 5-phosphate: step 5/6. Converts 2C-methyl-D-erythritol 2,4-cyclodiphosphate (ME-2,4cPP) into 1-hydroxy-2-methyl-2-(E)-butenyl 4-diphosphate. The chain is 4-hydroxy-3-methylbut-2-en-1-yl diphosphate synthase (flavodoxin) from Bradyrhizobium sp. (strain BTAi1 / ATCC BAA-1182).